We begin with the raw amino-acid sequence, 339 residues long: Ketol-acid reductoisomerase (NADP(+)) (339 aa).

One can recognise a KARI N-terminal Rossmann domain in the interval Met-1–Thr-182. NADP(+)-binding positions include Tyr-25–Gln-28, Ser-51, Ser-53, and Asp-83–Gln-86. His-108 is a catalytic residue. Residue Gly-134 participates in NADP(+) binding. Residues Asn-183–Leu-328 enclose the KARI C-terminal knotted domain. 4 residues coordinate Mg(2+): Asp-191, Glu-195, Glu-227, and Glu-231. Ser-252 contributes to the substrate binding site.

This sequence belongs to the ketol-acid reductoisomerase family. It depends on Mg(2+) as a cofactor.

It catalyses the reaction (2R)-2,3-dihydroxy-3-methylbutanoate + NADP(+) = (2S)-2-acetolactate + NADPH + H(+). The catalysed reaction is (2R,3R)-2,3-dihydroxy-3-methylpentanoate + NADP(+) = (S)-2-ethyl-2-hydroxy-3-oxobutanoate + NADPH + H(+). The protein operates within amino-acid biosynthesis; L-isoleucine biosynthesis; L-isoleucine from 2-oxobutanoate: step 2/4. It functions in the pathway amino-acid biosynthesis; L-valine biosynthesis; L-valine from pyruvate: step 2/4. Its function is as follows. Involved in the biosynthesis of branched-chain amino acids (BCAA). Catalyzes an alkyl-migration followed by a ketol-acid reduction of (S)-2-acetolactate (S2AL) to yield (R)-2,3-dihydroxy-isovalerate. In the isomerase reaction, S2AL is rearranged via a Mg-dependent methyl migration to produce 3-hydroxy-3-methyl-2-ketobutyrate (HMKB). In the reductase reaction, this 2-ketoacid undergoes a metal-dependent reduction by NADPH to yield (R)-2,3-dihydroxy-isovalerate. This chain is Ketol-acid reductoisomerase (NADP(+)), found in Solibacter usitatus (strain Ellin6076).